Consider the following 813-residue polypeptide: Protein PPP4R3C1 (813 aa).

The segment at Asn-730–Thr-813 is disordered. The span at Tyr-777–Tyr-788 shows a compositional bias: acidic residues.

The protein belongs to the SMEK family.

The chain is Protein PPP4R3C1 from Mus musculus (Mouse).